The sequence spans 504 residues: Cytochrome P450 7A1 (504 aa).

A helical transmembrane segment spans residues 4–24 (TSLIWGIAIAACCCLWLILGI). Residue C444 participates in heme binding.

Belongs to the cytochrome P450 family. The cofactor is heme. In terms of tissue distribution, detected in liver.

The protein resides in the endoplasmic reticulum membrane. It is found in the microsome membrane. The catalysed reaction is cholesterol + reduced [NADPH--hemoprotein reductase] + O2 = 7alpha-hydroxycholesterol + oxidized [NADPH--hemoprotein reductase] + H2O + H(+). The enzyme catalyses 4beta-hydroxycholesterol + reduced [NADPH--hemoprotein reductase] + O2 = 4beta,7alpha-dihydroxycholesterol + oxidized [NADPH--hemoprotein reductase] + H2O + H(+). It catalyses the reaction lathosterol + reduced [NADPH--hemoprotein reductase] + O2 = 7alpha,8alpha-epoxy-5alpha-cholestan-3beta-ol + oxidized [NADPH--hemoprotein reductase] + H2O + H(+). It carries out the reaction lathosterol + reduced [NADPH--hemoprotein reductase] + O2 = 5alpha-cholestan-7-oxo-3beta-ol + oxidized [NADPH--hemoprotein reductase] + H2O + H(+). The catalysed reaction is 7-dehydrocholesterol + reduced [NADPH--hemoprotein reductase] + O2 = 7-oxocholesterol + oxidized [NADPH--hemoprotein reductase] + H2O + H(+). The enzyme catalyses (24S)-hydroxycholesterol + reduced [NADPH--hemoprotein reductase] + O2 = (24S)-7alpha-dihydroxycholesterol + oxidized [NADPH--hemoprotein reductase] + H2O + H(+). It catalyses the reaction (24R)-hydroxycholesterol + reduced [NADPH--hemoprotein reductase] + O2 = (24R)-7alpha-dihydroxycholesterol + oxidized [NADPH--hemoprotein reductase] + H2O + H(+). Its pathway is lipid metabolism; bile acid biosynthesis. It functions in the pathway steroid metabolism; cholesterol degradation. Functionally, a cytochrome P450 monooxygenase involved in the metabolism of endogenous cholesterol and its oxygenated derivatives (oxysterols). Mechanistically, uses molecular oxygen inserting one oxygen atom into a substrate, and reducing the second into a water molecule, with two electrons provided by NADPH via cytochrome P450 reductase (CPR; NADPH-ferrihemoprotein reductase). Functions as a critical regulatory enzyme of bile acid biosynthesis and cholesterol homeostasis. Catalyzes the hydroxylation of carbon hydrogen bond at 7-alpha position of cholesterol, a rate-limiting step in cholesterol catabolism and bile acid biosynthesis. 7-alpha hydroxylates several oxysterols, including 4beta-hydroxycholesterol and 24-hydroxycholesterol. Catalyzes the oxidation of the 7,8 double bond of 7-dehydrocholesterol and lathosterol with direct and predominant formation of the 7-keto derivatives. In Homo sapiens (Human), this protein is Cytochrome P450 7A1.